Consider the following 564-residue polypeptide: Urocanate hydratase (564 aa).

NAD(+) is bound by residues 54 to 55 (GG), glutamine 132, 178 to 180 (GMG), glutamate 198, arginine 203, 244 to 245 (NA), 269 to 273 (QTSAH), 279 to 280 (YL), and tyrosine 328. Cysteine 416 is a catalytic residue. Residue glycine 498 participates in NAD(+) binding.

It belongs to the urocanase family. Homodimer. It depends on NAD(+) as a cofactor.

The enzyme catalyses 4-imidazolone-5-propanoate = trans-urocanate + H2O. The protein operates within amino-acid degradation; L-histidine degradation into L-glutamate; N-formimidoyl-L-glutamate from L-histidine: step 2/3. The protein is Urocanate hydratase of Trifolium repens (Creeping white clover).